The primary structure comprises 218 residues: TPA-induced transmembrane protein homolog (218 aa).

Positions 1 to 54 (MEEGSRSQSPREELELSMLDGPQEELTPLNNDLRIQPNSAEDPSPAQVGKESPW) are disordered. The chain crosses the membrane as a helical span at residues 66–86 (KLWMVIVTIFLCFIIVIVISL).

The protein resides in the endoplasmic reticulum membrane. The sequence is that of TPA-induced transmembrane protein homolog from Mus musculus (Mouse).